The primary structure comprises 91 residues: MSKIEALAPKPFLYDLKGKKIAVRLKWGGMEYRGILASVDSYMNLQLAATEEWIDGANKGPLGEVLIRCNNVLFVRGIDDEQQQSQQQQQE.

Positions alanine 8–glutamate 81 constitute a Sm domain.

The protein belongs to the snRNP Sm proteins family. SmF/LSm6 subfamily. As to quaternary structure, core component of the spliceosomal U1, U2, U4 and U5 small nuclear ribonucleoproteins (snRNPs), the building blocks of the spliceosome. Most spliceosomal snRNPs contain a common set of Sm proteins, SNRPB, SNRPD1, SNRPD2, SNRPD3, SNRPE, SNRPF and SNRPG that assemble in a heptameric protein ring on the Sm site of the small nuclear RNA to form the core snRNP. Component of the U1 snRNP. Component of the U4/U6-U5 tri-snRNP complex. Component of the U7 snRNP complex. Component of the U11/U12 snRNPs that are part of the U12-type spliceosome. Part of the SMN-Sm complex that catalyzes core snRNPs assembly.

Its subcellular location is the cytoplasm. The protein resides in the cytosol. It localises to the nucleus. Its function is as follows. Plays a role in pre-mRNA splicing as a core component of the spliceosomal U1, U2, U4 and U5 small nuclear ribonucleoproteins (snRNPs), the building blocks of the spliceosome. Component of both the pre-catalytic spliceosome B complex and activated spliceosome C complexes. Is also a component of the minor U12 spliceosome. This chain is Small nuclear ribonucleoprotein F (snrpf), found in Dictyostelium discoideum (Social amoeba).